Reading from the N-terminus, the 396-residue chain is MAKEKFERNKPHVNIGTIGHVDHGKTSLTAAITKVLAKTGGATFLAYDQIDKAPEERERGITISTAHVEYQTKNRHYAHVDCPGHADYVKNMITGAAQMDGAILVVSAADGPMPQTREHILLARQVGVPYIVVFLNKVDMLDDPELRELVEMEVRDLLKKYEFPGDSIPIIPGSALKALEGDTSDIGEGAILKLMAAVDEYIPTPQRATDKPFLMPVEDVFSIAGRGTVATGRVERGKIKVGEEVEIVGIRPTQKTVITGVEMFRKLLDEGMAGDNIGALLRGLKREDLERGQVLANWGSINPHTKFKAQVYVLSKEEGGRHTPFFKGYRPQFYFRTTDVTGTVKLPDNVEMVMPGDNIAIEVELITPVAMEKELPFAIREGGRTVGAGVVADIIA.

Residues 10-206 (KPHVNIGTIG…AVDEYIPTPQ (197 aa)) form the tr-type G domain. The G1 stretch occupies residues 19–26 (GHVDHGKT). 19 to 26 (GHVDHGKT) contributes to the GTP binding site. Residue Thr26 coordinates Mg(2+). The segment at 60–64 (GITIS) is G2. Residues 81 to 84 (DCPG) are G3. Residues 81–85 (DCPGH) and 136–139 (NKVD) contribute to the GTP site. Residues 136–139 (NKVD) are G4. Residues 174-176 (SAL) are G5.

The protein belongs to the TRAFAC class translation factor GTPase superfamily. Classic translation factor GTPase family. EF-Tu/EF-1A subfamily. In terms of assembly, monomer.

It localises to the cytoplasm. It catalyses the reaction GTP + H2O = GDP + phosphate + H(+). GTP hydrolase that promotes the GTP-dependent binding of aminoacyl-tRNA to the A-site of ribosomes during protein biosynthesis. The sequence is that of Elongation factor Tu from Stigmatella aurantiaca.